Reading from the N-terminus, the 794-residue chain is Protein SPA1-RELATED 4 (794 aa).

A Protein kinase domain is found at 1–268; it reads MKGSSESSSR…MSELLQSEFI (268 aa). Positions 126–165 are disordered; sequence SCSDSGSDEDATTKSREIGSSRQEEILSERRSKQQEEVKK. Positions 136 to 165 are enriched in basic and acidic residues; sequence ATTKSREIGSSRQEEILSERRSKQQEEVKK. A coiled-coil region spans residues 272-326; it reads RENLEEREAAMELRDRIEEQELLLEFLFLIQQRKQEAADKLQDTISLLSSDIDQV. Disordered regions lie at residues 352–373 and 428–447; these read QGAE…EESK and GRSS…INDS. Acidic residues predominate over residues 358–369; the sequence is AAEEENDDNSID. WD repeat units lie at residues 482 to 521, 531 to 571, 574 to 614, 616 to 656, 660 to 698, 707 to 746, and 762 to 794; these read NSSN…KDGR, ASRS…LVTE, EHEK…SIGT, KTKA…LPLC, GHHK…SGIN, GHTN…PVLS, and DASQ…LEMV. A DWD box motif is present at residues 635 to 649; the sequence is AFGSADHKVYYYDLR.

As to quaternary structure, interacts with COP1 and CO. Binds to CRY1 in response to blue light, this interaction prevents SPA1/COP1 complex formation and thus avoid COP1-dependent degradation of the transcription factor HY5 by the proteasome and promotes hypocotyl elongation.

It localises to the nucleus. Functionally, repressor of photomorphogenesis in the light. Probably part of the COP1/SPA E3 ubiquitin-protein ligase complex. The sequence is that of Protein SPA1-RELATED 4 (SPA4) from Arabidopsis thaliana (Mouse-ear cress).